The sequence spans 287 residues: Lipoyl synthase (287 aa).

7 residues coordinate [4Fe-4S] cluster: Cys-38, Cys-43, Cys-49, Cys-64, Cys-68, Cys-71, and Ser-277. One can recognise a Radical SAM core domain in the interval 50-266; that stretch reads WSRGTATFLL…KTVAESLGLR (217 aa).

It belongs to the radical SAM superfamily. Lipoyl synthase family. [4Fe-4S] cluster serves as cofactor.

The protein localises to the cytoplasm. It catalyses the reaction [[Fe-S] cluster scaffold protein carrying a second [4Fe-4S](2+) cluster] + N(6)-octanoyl-L-lysyl-[protein] + 2 oxidized [2Fe-2S]-[ferredoxin] + 2 S-adenosyl-L-methionine + 4 H(+) = [[Fe-S] cluster scaffold protein] + N(6)-[(R)-dihydrolipoyl]-L-lysyl-[protein] + 4 Fe(3+) + 2 hydrogen sulfide + 2 5'-deoxyadenosine + 2 L-methionine + 2 reduced [2Fe-2S]-[ferredoxin]. The protein operates within protein modification; protein lipoylation via endogenous pathway; protein N(6)-(lipoyl)lysine from octanoyl-[acyl-carrier-protein]: step 2/2. In terms of biological role, catalyzes the radical-mediated insertion of two sulfur atoms into the C-6 and C-8 positions of the octanoyl moiety bound to the lipoyl domains of lipoate-dependent enzymes, thereby converting the octanoylated domains into lipoylated derivatives. This is Lipoyl synthase from Chlorobium phaeobacteroides (strain DSM 266 / SMG 266 / 2430).